The primary structure comprises 270 residues: 3-methyl-2-oxobutanoate hydroxymethyltransferase (270 aa).

Residues Asp43 and Asp82 each contribute to the Mg(2+) site. Residues 43–44 (DS), Asp82, and Lys110 contribute to the 3-methyl-2-oxobutanoate site. Position 112 (Glu112) interacts with Mg(2+). Glu179 functions as the Proton acceptor in the catalytic mechanism.

The protein belongs to the PanB family. In terms of assembly, homodecamer; pentamer of dimers. It depends on Mg(2+) as a cofactor.

Its subcellular location is the cytoplasm. It carries out the reaction 3-methyl-2-oxobutanoate + (6R)-5,10-methylene-5,6,7,8-tetrahydrofolate + H2O = 2-dehydropantoate + (6S)-5,6,7,8-tetrahydrofolate. It functions in the pathway cofactor biosynthesis; (R)-pantothenate biosynthesis; (R)-pantoate from 3-methyl-2-oxobutanoate: step 1/2. Its function is as follows. Catalyzes the reversible reaction in which hydroxymethyl group from 5,10-methylenetetrahydrofolate is transferred onto alpha-ketoisovalerate to form ketopantoate. The protein is 3-methyl-2-oxobutanoate hydroxymethyltransferase of Psychrobacter sp. (strain PRwf-1).